A 501-amino-acid chain; its full sequence is 2,3-bisphosphoglycerate-independent phosphoglycerate mutase (501 aa).

Mn(2+) contacts are provided by aspartate 12 and serine 62. The active-site Phosphoserine intermediate is serine 62. Substrate-binding positions include histidine 121, 150-151 (RD), arginine 182, arginine 188, 253-256 (RSDR), and lysine 322. The Mn(2+) site is built by aspartate 389, histidine 393, aspartate 430, histidine 431, and histidine 449.

The protein belongs to the BPG-independent phosphoglycerate mutase family. Monomer. The cofactor is Mn(2+).

The catalysed reaction is (2R)-2-phosphoglycerate = (2R)-3-phosphoglycerate. It functions in the pathway carbohydrate degradation; glycolysis; pyruvate from D-glyceraldehyde 3-phosphate: step 3/5. Its function is as follows. Catalyzes the interconversion of 2-phosphoglycerate and 3-phosphoglycerate. The sequence is that of 2,3-bisphosphoglycerate-independent phosphoglycerate mutase from Ehrlichia ruminantium (strain Gardel).